The following is a 276-amino-acid chain: Large ribosomal subunit protein uL2 (276 aa).

2 disordered regions span residues 1-20 (MGIK…TTND) and 219-276 (TVRG…RRKK). A compositionally biased stretch (polar residues) spans 7–20 (NPTTNGRRNMTTND).

The protein belongs to the universal ribosomal protein uL2 family. Part of the 50S ribosomal subunit. Forms a bridge to the 30S subunit in the 70S ribosome.

Functionally, one of the primary rRNA binding proteins. Required for association of the 30S and 50S subunits to form the 70S ribosome, for tRNA binding and peptide bond formation. It has been suggested to have peptidyltransferase activity; this is somewhat controversial. Makes several contacts with the 16S rRNA in the 70S ribosome. This is Large ribosomal subunit protein uL2 from Bacillus mycoides (strain KBAB4) (Bacillus weihenstephanensis).